Here is a 400-residue protein sequence, read N- to C-terminus: ELAV-like protein 4 (400 aa).

Residues 12 to 48 form a disordered region; that stretch reads TMEPQVSNGPTSNTSNGPSSNSRNCPSPMQTGAATDD. Residues 18-33 are compositionally biased toward low complexity; the sequence is SNGPTSNTSNGPSSNS. Polar residues predominate over residues 34-44; it reads RNCPSPMQTGA. RRM domains are found at residues 51–158, 166–246, and 317–395; these read TNLI…YARP, ANLY…FANN, and WCIF…FKTN.

The protein belongs to the RRM elav family.

It is found in the cytoplasm. The protein localises to the perikaryon. It localises to the cell projection. Its subcellular location is the axon. The protein resides in the dendrite. It is found in the growth cone. RNA-binding protein that is involved in the post-transcriptional regulation of mRNAs. Plays a role in the regulation of mRNA stability, alternative splicing and translation. Binds to AU-rich element (ARE) sequences in the 3' untranslated region (3'UTR) of target mRNAs. Mainly plays a role in neuron-specific RNA processing. The sequence is that of ELAV-like protein 4 (elavl4) from Xenopus tropicalis (Western clawed frog).